Reading from the N-terminus, the 497-residue chain is MYSDSEDESSELSTVLSMFEEKEFTRQYTVLKTLSQHGTTEVRLCSHHLTGVTVAVKALKYQRWWEPKVSEVEIMKMLSHPNIVSLLQVIETEQNIYLIMEVAQGTQLHNRVQEARCLKEDEARSIFVQLLSAIGYCHGEGVVHRDLKPDNVIVDEHGNVKIVDFGLGARFMPGQKLERLCGAFQFIPPEIFLGLPYDGPKVDIWALGVLLYYMVTGIFPFVGSTLSEISKEVLQGRYEIPYNLSKDLRSMIGLLLATNARQRPTAQDLLSHPWLQEGEKTITFHSNGDTSFPDPDIMAAMKNIGFHVQDIRESLKHRKFDETMATYNLLRAEACQDDGNYVQTKLMNPGMPPFPSVTDSGAFSLPPRRRASEPSFKVLVSSTEEHQLRQTGGTNAPFPPKKTPTMGRSQKQKRAMTAPCICLLRNTYIDTEDSSFCTSSQAEKTSSDPEKSETSTSCPLTPRGWRKWKKRIVACIQTLCCCTLPQKKCPRSVHPQK.

Residues Tyr-28–Leu-275 form the Protein kinase domain. ATP contacts are provided by residues Leu-34–Val-42 and Lys-57. The active-site Proton acceptor is the Asp-146. The UBA domain occupies Phe-292–Ala-332. Disordered stretches follow at residues Thr-383–Gln-410 and Ser-439–Leu-460.

The protein belongs to the protein kinase superfamily. CAMK Ser/Thr protein kinase family. Smok subfamily.

The enzyme catalyses L-seryl-[protein] + ATP = O-phospho-L-seryl-[protein] + ADP + H(+). The catalysed reaction is L-threonyl-[protein] + ATP = O-phospho-L-threonyl-[protein] + ADP + H(+). In terms of biological role, may play a role in sperm motility, especially in the regulation of flagellar function. The polypeptide is Sperm motility kinase Z (Gm4922) (Mus musculus (Mouse)).